An 887-amino-acid polypeptide reads, in one-letter code: Probable dual specificity protein kinase madd-3 (887 aa).

Disordered regions lie at residues 77 to 147 (PIKS…ISAA), 163 to 299 (AQPP…PKAL), 313 to 333 (LPQS…STGG), 347 to 475 (TTIC…KSAA), and 504 to 533 (RKPS…QHQD). Residues 108–118 (PTQNPVQLPLP) show a composition bias toward low complexity. Residues 121–130 (VSEKPGDKKS) show a composition bias toward basic and acidic residues. Residues 177–192 (SETNSGSGPVSKQVSG) are compositionally biased toward polar residues. Residues 217–241 (SSASTRAKAASAVAPEANPAPVPTA) are compositionally biased toward low complexity. Polar residues-rich tracts occupy residues 314 to 332 (PQSS…TSTG) and 356 to 366 (NVPSTSQPQQG). Basic and acidic residues predominate over residues 367–377 (DNEKRLIEKKL). The span at 407–419 (LSSNLTTTNNNNN) shows a compositional bias: low complexity. The span at 439–462 (FSTQAGSGNATTVDDPASTTTSKE) shows a compositional bias: polar residues. The Protein kinase domain occupies 551–863 (FTIYDTLGEG…LPEALQHRYF (313 aa)). Residues 557–565 (LGEGTFGKV) and Lys-580 each bind ATP. Asp-677 acts as the Proton acceptor in catalysis.

It belongs to the protein kinase superfamily. CMGC Ser/Thr protein kinase family. Lammer subfamily. Expressed in body wall, vulval and anal depressor muscles.

It localises to the cytoplasm. The protein resides in the nucleus. Probable dual specificity kinase acting on both serine/threonine and tyrosine-containing substrates. Negatively regulates p38 MAPK signaling to allow for the plasma membrane of body wall muscle cells to form projections, also called muscle arms, that extend and connect the body wall muscles to target motor neurons. Negative regulation of p38 MAPK signaling may in turn modulate the trafficking of the muscle specific receptor eva-1 to the lysosome, to ensure proper display of the eva-1 receptor on the plasma membrane of muscle cells and allow for muscle arm extension towards guidance cues. This chain is Probable dual specificity protein kinase madd-3, found in Caenorhabditis elegans.